The primary structure comprises 882 residues: Translation initiation factor IF-2 (882 aa).

The segment at 57-211 is disordered; it reads YIPANKTKDK…KDKSKPKVAT (155 aa). Basic and acidic residues predominate over residues 104–115; that stretch reads TTSEKQKDKGEQ. Over residues 199 to 211 the composition is skewed to basic residues; sequence RHKKDKSKPKVAT. The tr-type G domain maps to 381–550; sequence ERPPVVTIMG…LIQAEVLELK (170 aa). The G1 stretch occupies residues 390–397; the sequence is GHVDHGKT. 390–397 is a GTP binding site; that stretch reads GHVDHGKT. The tract at residues 415 to 419 is G2; that stretch reads GITQH. The G3 stretch occupies residues 436–439; sequence DTPG. Residues 436-440 and 490-493 contribute to the GTP site; these read DTPGH and NKMD. Positions 490 to 493 are G4; the sequence is NKMD. Positions 526–528 are G5; sequence SAK.

The protein belongs to the TRAFAC class translation factor GTPase superfamily. Classic translation factor GTPase family. IF-2 subfamily.

The protein localises to the cytoplasm. One of the essential components for the initiation of protein synthesis. Protects formylmethionyl-tRNA from spontaneous hydrolysis and promotes its binding to the 30S ribosomal subunits. Also involved in the hydrolysis of GTP during the formation of the 70S ribosomal complex. This is Translation initiation factor IF-2 from Helicobacter hepaticus (strain ATCC 51449 / 3B1).